The following is a 189-amino-acid chain: Elongation factor P (189 aa).

It belongs to the elongation factor P family.

The protein resides in the cytoplasm. The protein operates within protein biosynthesis; polypeptide chain elongation. Functionally, involved in peptide bond synthesis. Stimulates efficient translation and peptide-bond synthesis on native or reconstituted 70S ribosomes in vitro. Probably functions indirectly by altering the affinity of the ribosome for aminoacyl-tRNA, thus increasing their reactivity as acceptors for peptidyl transferase. This Orientia tsutsugamushi (strain Ikeda) (Rickettsia tsutsugamushi) protein is Elongation factor P.